The following is a 253-amino-acid chain: Ribonuclease HII (253 aa).

The 192-residue stretch at 30-221 (GPVAGVDEVG…VRRLVVDGEP (192 aa)) folds into the RNase H type-2 domain. 3 residues coordinate a divalent metal cation: aspartate 36, glutamate 37, and aspartate 130.

This sequence belongs to the RNase HII family. Requires Mn(2+) as cofactor. Mg(2+) is required as a cofactor.

It is found in the cytoplasm. The catalysed reaction is Endonucleolytic cleavage to 5'-phosphomonoester.. In terms of biological role, endonuclease that specifically degrades the RNA of RNA-DNA hybrids. This Mycolicibacterium gilvum (strain PYR-GCK) (Mycobacterium gilvum (strain PYR-GCK)) protein is Ribonuclease HII.